Reading from the N-terminus, the 226-residue chain is Small ribosomal subunit protein uS5 (226 aa).

Positions 1–71 (MEDIKHNKKP…RKNEKRTKSE (71 aa)) are disordered. Positions 24 to 54 (ANPQANHANPNNRSASVNNNSVNNNKKNSSR) are enriched in low complexity. The region spanning 72-135 (FEEKIVKISR…KMAENNVQKI (64 aa)) is the S5 DRBM domain.

This sequence belongs to the universal ribosomal protein uS5 family. As to quaternary structure, part of the 30S ribosomal subunit. Contacts proteins S4 and S8.

In terms of biological role, with S4 and S12 plays an important role in translational accuracy. Functionally, located at the back of the 30S subunit body where it stabilizes the conformation of the head with respect to the body. The sequence is that of Small ribosomal subunit protein uS5 from Mycoplasmoides gallisepticum (strain R(low / passage 15 / clone 2)) (Mycoplasma gallisepticum).